The primary structure comprises 314 residues: 1,4-dihydroxy-2-naphthoyl-CoA synthase (314 aa).

Substrate is bound by residues Arg58, 103–107, Tyr115, 157–161, Thr184, Ser190, Tyr287, and Lys302; these read SGGDQ and WAAGG.

Belongs to the enoyl-CoA hydratase/isomerase family. MenB subfamily.

It carries out the reaction 2-succinylbenzoyl-CoA + H(+) = 1,4-dihydroxy-2-naphthoyl-CoA + H2O. Its pathway is quinol/quinone metabolism; 1,4-dihydroxy-2-naphthoate biosynthesis; 1,4-dihydroxy-2-naphthoate from chorismate: step 6/7. The protein operates within quinol/quinone metabolism; menaquinone biosynthesis. Its function is as follows. Converts o-succinylbenzoyl-CoA (OSB-CoA) to 1,4-dihydroxy-2-naphthoyl-CoA (DHNA-CoA). The protein is 1,4-dihydroxy-2-naphthoyl-CoA synthase of Mycobacterium tuberculosis (strain CDC 1551 / Oshkosh).